Reading from the N-terminus, the 21-residue chain is MGIIAGIIKVIKSLIEQFTGK.

Belongs to the phenol-soluble modulin alpha peptides family.

Its function is as follows. Peptide which can recruit, activate and subsequently lyse human neutrophils, thus eliminating the main cellular defense against infection. The protein is Phenol-soluble modulin alpha 1 peptide (psmA1) of Staphylococcus aureus (strain Mu3 / ATCC 700698).